A 369-amino-acid polypeptide reads, in one-letter code: S-(hydroxymethyl)glutathione dehydrogenase (369 aa).

Positions 40, 62, 92, 95, 98, 106, and 169 each coordinate Zn(2+).

Belongs to the zinc-containing alcohol dehydrogenase family. Class-III subfamily. Homodimer. Requires Zn(2+) as cofactor.

The protein resides in the cytoplasm. The catalysed reaction is S-(hydroxymethyl)glutathione + NADP(+) = S-formylglutathione + NADPH + H(+). It carries out the reaction S-(hydroxymethyl)glutathione + NAD(+) = S-formylglutathione + NADH + H(+). It catalyses the reaction a primary alcohol + NAD(+) = an aldehyde + NADH + H(+). The enzyme catalyses a secondary alcohol + NAD(+) = a ketone + NADH + H(+). The catalysed reaction is S-nitrosoglutathione + NADH + H(+) = S-(hydroxysulfenamide)glutathione + NAD(+). Functionally, has high formaldehyde dehydrogenase activity in the presence of glutathione and catalyzes the oxidation of normal alcohols in a reaction that is not GSH-dependent. In addition, hemithiolacetals other than those formed from GSH, including omega-thiol fatty acids, also are substrates. Also acts as a S-nitroso-glutathione reductase by catalyzing the NADH-dependent reduction of S-nitrosoglutathione. The chain is S-(hydroxymethyl)glutathione dehydrogenase (frmA) from Escherichia coli O1:K1 / APEC.